A 223-amino-acid polypeptide reads, in one-letter code: MNSNVENLPPHIIRLVYKEVTTLTADPPDGIKVFPNEEDLTDLQVTIEGPEGTPYAGGLFRMKLLLGKDFPASPPKGYFLTKIFHPNVGANGEICVNVLKRDWTAELGIRHVLLTIKCLLIHPNPESALNEEAGRLLLENYEEYAARARLLTEIHGGAGGPSGGRPEPGRATASGAAASTADPTAPGGPAGAEGPMAKKHAGERDKKLAAKKKTDKKRALRRL.

N-acetylmethionine is present on Met1. In terms of domain architecture, UBC core spans 11-157 (HIIRLVYKEV…ARLLTEIHGG (147 aa)). Residue Cys95 is the Glycyl thioester intermediate of the active site. The interval 155 to 223 (HGGAGGPSGG…TDKKRALRRL (69 aa)) is disordered. A compositionally biased stretch (low complexity) spans 169–195 (GRATASGAAASTADPTAPGGPAGAEGP). Residue Ser174 is modified to Phosphoserine. Residues 209 to 223 (AAKKKTDKKRALRRL) show a composition bias toward basic residues.

The protein belongs to the ubiquitin-conjugating enzyme family. Component of the APC/C complex, composed of at least 14 distinct subunits that assemble into a complex of at least 19 chains with a combined molecular mass of around 1.2 MDa. Within this complex, directly interacts with ANAPC2 and ANAPC4. Interacts with CDC20, FZR1/CDH1 and VHL. Autoubiquitinated by the APC/C complex during G1, leading to its degradation by the proteasome.

It carries out the reaction S-ubiquitinyl-[E1 ubiquitin-activating enzyme]-L-cysteine + [E2 ubiquitin-conjugating enzyme]-L-cysteine = [E1 ubiquitin-activating enzyme]-L-cysteine + S-ubiquitinyl-[E2 ubiquitin-conjugating enzyme]-L-cysteine.. Its pathway is protein modification; protein ubiquitination. Its function is as follows. Accepts ubiquitin from the E1 complex and catalyzes its covalent attachment to other proteins. Catalyzes 'Lys-11'-linked polyubiquitination. Acts as an essential factor of the anaphase promoting complex/cyclosome (APC/C), a cell cycle-regulated ubiquitin ligase that controls progression through mitosis. Acts by specifically elongating 'Lys-11'-linked polyubiquitin chains initiated by the E2 enzyme UBE2C/UBCH10 on APC/C substrates, enhancing the degradation of APC/C substrates by the proteasome and promoting mitotic exit. Also acts by elongating ubiquitin chains initiated by the E2 enzyme UBE2D1/UBCH5 in vitro; it is however unclear whether UBE2D1/UBCH5 acts as an E2 enzyme for the APC/C in vivo. Also involved in ubiquitination and subsequent degradation of VHL, resulting in an accumulation of HIF1A. In vitro able to promote polyubiquitination using all 7 ubiquitin Lys residues, except 'Lys-48'-linked polyubiquitination. The chain is Ubiquitin-conjugating enzyme E2 S (UBE2S) from Bos taurus (Bovine).